The sequence spans 211 residues: Protoglabretal synthase MOI1 (211 aa).

A run of 5 helical transmembrane segments spans residues 16–36, 50–70, 104–124, 135–155, and 179–199; these read ASLH…TWII, LICW…YYVF, VLGI…LAAY, IFQF…FLTA, and IWVI…HAIC. An EXPERA domain is found at 46–188; it reads IERLLICWWA…IWVIVPMLIA (143 aa).

The protein belongs to the EBP family. Expressed in maturing fruits and in juice vesicles.

The protein resides in the membrane. The enzyme catalyses 7,8-epoxymelianol = protoglabretal. It participates in secondary metabolite biosynthesis; terpenoid biosynthesis. Functionally, isomerase involved in the biosynthesis of glabretanes triterpene natural products such as glabretal, a component with in vitro antiproliferative properties on lymphocytes. Catalyzes the conversion of 7,8-epoxymelianol to protoglabretal via skeletal rearrangements. In Citrus sinensis (Sweet orange), this protein is Protoglabretal synthase MOI1.